The following is a 308-amino-acid chain: Putative S-adenosyl-L-methionine-dependent methyltransferase MAB_4585c (308 aa).

S-adenosyl-L-methionine-binding positions include Asp131 and 160-161 (DL).

The protein belongs to the UPF0677 family.

Functionally, exhibits S-adenosyl-L-methionine-dependent methyltransferase activity. This chain is Putative S-adenosyl-L-methionine-dependent methyltransferase MAB_4585c, found in Mycobacteroides abscessus (strain ATCC 19977 / DSM 44196 / CCUG 20993 / CIP 104536 / JCM 13569 / NCTC 13031 / TMC 1543 / L948) (Mycobacterium abscessus).